The primary structure comprises 397 residues: Tryptophan synthase beta chain 1 (397 aa).

The residue at position 90 (Lys-90) is an N6-(pyridoxal phosphate)lysine.

The protein belongs to the TrpB family. In terms of assembly, tetramer of two alpha and two beta chains. It depends on pyridoxal 5'-phosphate as a cofactor.

The catalysed reaction is (1S,2R)-1-C-(indol-3-yl)glycerol 3-phosphate + L-serine = D-glyceraldehyde 3-phosphate + L-tryptophan + H2O. The protein operates within amino-acid biosynthesis; L-tryptophan biosynthesis; L-tryptophan from chorismate: step 5/5. In terms of biological role, the beta subunit is responsible for the synthesis of L-tryptophan from indole and L-serine. This Aquifex aeolicus (strain VF5) protein is Tryptophan synthase beta chain 1 (trpB1).